The sequence spans 461 residues: Cysteine--tRNA ligase (461 aa).

Cys-28 lines the Zn(2+) pocket. Positions 30–40 match the 'HIGH' region motif; that stretch reads ITVYDLCHIGH. Zn(2+) is bound by residues Cys-209, His-234, and Glu-238. The 'KMSKS' region motif lies at 266–270; the sequence is KMSKS. Lys-269 serves as a coordination point for ATP.

The protein belongs to the class-I aminoacyl-tRNA synthetase family. As to quaternary structure, monomer. Requires Zn(2+) as cofactor.

It is found in the cytoplasm. It catalyses the reaction tRNA(Cys) + L-cysteine + ATP = L-cysteinyl-tRNA(Cys) + AMP + diphosphate. In Shigella flexneri, this protein is Cysteine--tRNA ligase.